Consider the following 510-residue polypeptide: AAA-ATPase At3g28540 (510 aa).

The helical transmembrane segment at 7-25 threads the bilayer; sequence LFGFTGTTMASLMFFWSVY. 246–253 is a binding site for ATP; the sequence is GPPGTGKS. A disordered region spans residues 460–510; the sequence is KEKAKKLAEEEKMKKAARDARRIKKKAEEEHKKKNKVEENGDVSHDNGNHI.

It belongs to the AAA ATPase family. BCS1 subfamily. The cofactor is Mg(2+).

It localises to the membrane. It carries out the reaction ATP + H2O = ADP + phosphate + H(+). The chain is AAA-ATPase At3g28540 from Arabidopsis thaliana (Mouse-ear cress).